Consider the following 170-residue polypeptide: UPF0316 protein CLK_3798 (170 aa).

A run of 2 helical transmembrane segments spans residues 1–21 (MLSY…LMTI) and 36–56 (IIGF…LSGI).

The protein belongs to the UPF0316 family.

The protein localises to the cell membrane. This chain is UPF0316 protein CLK_3798, found in Clostridium botulinum (strain Loch Maree / Type A3).